A 425-amino-acid chain; its full sequence is Histidine--tRNA ligase 2 (425 aa).

Belongs to the class-II aminoacyl-tRNA synthetase family. In terms of assembly, homodimer.

It localises to the cytoplasm. The catalysed reaction is tRNA(His) + L-histidine + ATP = L-histidyl-tRNA(His) + AMP + diphosphate + H(+). The chain is Histidine--tRNA ligase 2 from Shouchella clausii (strain KSM-K16) (Alkalihalobacillus clausii).